Here is a 420-residue protein sequence, read N- to C-terminus: ATP phosphoribosyltransferase regulatory subunit (420 aa).

Belongs to the class-II aminoacyl-tRNA synthetase family. HisZ subfamily. In terms of assembly, heteromultimer composed of HisG and HisZ subunits.

Its subcellular location is the cytoplasm. The protein operates within amino-acid biosynthesis; L-histidine biosynthesis; L-histidine from 5-phospho-alpha-D-ribose 1-diphosphate: step 1/9. Required for the first step of histidine biosynthesis. May allow the feedback regulation of ATP phosphoribosyltransferase activity by histidine. The protein is ATP phosphoribosyltransferase regulatory subunit of Bacillus cereus (strain G9842).